We begin with the raw amino-acid sequence, 282 residues long: 3-hydroxyanthranilate 3,4-dioxygenase (282 aa).

A domain A (catalytic) region spans residues 1 to 160 (MAMAINVKKW…SKQYKSGKPD (160 aa)). O2 is bound at residue Arg-43. Fe cation-binding residues include His-47, Glu-53, and His-91. Glu-53 contacts substrate. Substrate is bound by residues Arg-95 and Glu-105. The segment at 161-177 (PDQPKAKMPFCLSTEQV) is linker. The tract at residues 178–282 (MEPFSFQHWL…LSTSQVPLPM (105 aa)) is domain B.

It belongs to the 3-HAO family. As to quaternary structure, monomer. Fe(2+) serves as cofactor.

The protein localises to the cytoplasm. It localises to the cytosol. It carries out the reaction 3-hydroxyanthranilate + O2 = (2Z,4Z)-2-amino-3-carboxymuconate 6-semialdehyde. It functions in the pathway cofactor biosynthesis; NAD(+) biosynthesis; quinolinate from L-kynurenine: step 3/3. Functionally, catalyzes the oxidative ring opening of 3-hydroxyanthranilate to 2-amino-3-carboxymuconate semialdehyde, which spontaneously cyclizes to quinolinate. The chain is 3-hydroxyanthranilate 3,4-dioxygenase (haao) from Xenopus laevis (African clawed frog).